The chain runs to 98 residues: NADH-ubiquinone oxidoreductase chain 4L (98 aa).

The next 3 helical transmembrane spans lie at 2-22 (PPIF…TLIF), 29-49 (SLLC…LIIL), and 61-81 (ILLL…LVMV).

The protein belongs to the complex I subunit 4L family. Core subunit of respiratory chain NADH dehydrogenase (Complex I) which is composed of 45 different subunits.

It is found in the mitochondrion inner membrane. The catalysed reaction is a ubiquinone + NADH + 5 H(+)(in) = a ubiquinol + NAD(+) + 4 H(+)(out). Functionally, core subunit of the mitochondrial membrane respiratory chain NADH dehydrogenase (Complex I) which catalyzes electron transfer from NADH through the respiratory chain, using ubiquinone as an electron acceptor. Part of the enzyme membrane arm which is embedded in the lipid bilayer and involved in proton translocation. This is NADH-ubiquinone oxidoreductase chain 4L (MT-ND4L) from Avahi occidentalis (Western woolly lemur).